The chain runs to 43 residues: Protein PsbN (43 aa).

A helical transmembrane segment spans residues 5-27 (TVLSIFISSLLLGITGYSIYTAF).

This sequence belongs to the PsbN family.

The protein localises to the plastid. It is found in the chloroplast thylakoid membrane. Its function is as follows. May play a role in photosystem I and II biogenesis. The protein is Protein PsbN of Porphyra purpurea (Red seaweed).